The chain runs to 578 residues: MPLKHYLLLLVGCQAWALGLAYYGCPSECTCSRASQVECTGARIVAMPTPLPWNAMSLQVVNTHITELPENLFLNISALIALKMEKNELSTIMPGAFRNLGSLRYLSLANNKLRMLPIRVFQDVNNLESLLLSNNQLVQIQPAQFSQFSNLRELQLHGNNLESIPEEAFDHLVGLTKLNLGRNSFTHLSPRLFQHLGNLQVLRLHENRLSDIPMGTFDALGNLQELALQENQIGTLSPGLFHNNRNLQRLYLSNNHISQLPPGIFMQLPQLNKLTLFGNSLRELSPGVFGPMPNLRELWLYNNHITSLADNTFSHLNQLQVLILSHNQLTYISPGAFNGLTNLRELSLHTNALQDLDSNVFRSLANLQNISLQSNRLRQLPGSIFANVNGLTTIQLQNNNLENLPLGIFDHLVNLCELRLYDNPWRCDSDILPLHNWLLLNRARLGTDTLPVCSSPANVRGQSLVIININFPGPSVQGPETPEVPSYPDTPSYPDTTSVSSTTEITSAVDDYTDLTTIEATDDRNTWGMTEAQSGLAIAAIVIGIIALACSLAACICCCCCKKRSQAVLMQMKAPNEC.

The first 21 residues, 1–21 (MPLKHYLLLLVGCQAWALGLA), serve as a signal peptide directing secretion. In terms of domain architecture, LRRNT spans 22-53 (YYGCPSECTCSRASQVECTGARIVAMPTPLPW). Over 22 to 535 (YYGCPSECTC…TWGMTEAQSG (514 aa)) the chain is Extracellular. LRR repeat units follow at residues 54 to 75 (NAMSLQVVNTHITELPENLFLN), 78 to 99 (ALIALKMEKNELSTIMPGAFRN), 102 to 123 (SLRYLSLANNKLRMLPIRVFQD), 126 to 147 (NLESLLLSNNQLVQIQPAQFSQ), 150 to 171 (NLRELQLHGNNLESIPEEAFDH), 174 to 195 (GLTKLNLGRNSFTHLSPRLFQH), 198 to 219 (NLQVLRLHENRLSDIPMGTFDA), 222 to 243 (NLQELALQENQIGTLSPGLFHN), 246 to 267 (NLQRLYLSNNHISQLPPGIFMQ), 270 to 291 (QLNKLTLFGNSLRELSPGVFGP), 294 to 315 (NLRELWLYNNHITSLADNTFSH), 318 to 339 (QLQVLILSHNQLTYISPGAFNG), 342 to 363 (NLRELSLHTNALQDLDSNVFRS), 366 to 387 (NLQNISLQSNRLRQLPGSIFAN), and 390 to 411 (GLTTIQLQNNNLENLPLGIFDH). N-linked (GlcNAc...) asparagine glycosylation is present at asparagine 75. The N-linked (GlcNAc...) asparagine glycan is linked to asparagine 369. Residues 423 to 473 (NPWRCDSDILPLHNWLLLNRARLGTDTLPVCSSPANVRGQSLVIININFPG) form the LRRCT domain. The tract at residues 476–500 (VQGPETPEVPSYPDTPSYPDTTSVS) is disordered. A helical transmembrane segment spans residues 536 to 556 (LAIAAIVIGIIALACSLAACI). Residues 557 to 578 (CCCCCKKRSQAVLMQMKAPNEC) are Cytoplasmic-facing.

It is found in the cell membrane. The polypeptide is Leucine-rich repeat-containing protein 15 (Lrrc15) (Rattus norvegicus (Rat)).